Consider the following 312-residue polypeptide: L-lactate dehydrogenase (312 aa).

The NAD(+) site is built by V14, D35, and Y66. Substrate is bound by residues Q83 and R90. NAD(+)-binding positions include S103, 120–122 (ASN), and S145. 122–125 (NPVD) contacts substrate. 150-153 (DSAR) is a binding site for substrate. H177 functions as the Proton acceptor in the catalytic mechanism. Y220 carries the post-translational modification Phosphotyrosine. T229 lines the substrate pocket.

Belongs to the LDH/MDH superfamily. LDH family. In terms of assembly, homotetramer.

Its subcellular location is the cytoplasm. It catalyses the reaction (S)-lactate + NAD(+) = pyruvate + NADH + H(+). Its pathway is fermentation; pyruvate fermentation to lactate; (S)-lactate from pyruvate: step 1/1. In terms of biological role, catalyzes the conversion of lactate to pyruvate. The sequence is that of L-lactate dehydrogenase from Mycoplasma genitalium (strain ATCC 33530 / DSM 19775 / NCTC 10195 / G37) (Mycoplasmoides genitalium).